Consider the following 759-residue polypeptide: MSNLDNPGIYYQERFFANDGVPDTGRELIAEYRQLITQFRNFIRDFSTGGFGMIYRDQLKRNYFSHEYRLEINLNHLKNFDEDIEMKLRKFPGKVLPALEEAAKIVADEITTPRPKGEEKLHDIQVTLTLDEYPTSLRQVKSAQVSQVVKISGIIVAAAQVRSKATKVTLQCRQCKHTIPDVSIKPGLEGFALPRTCAAPQQGQMQRCPIDPYIMLPDKCECVDYQTLKLQENPEDVPHGEMPRHLQLFTERYLTDKVVPGNRVTIVGVYSIKKLIQKKGGDKSLQGIRTPYLRVLGIHMETSGPGRTNFTTFTPEEERMFKTLAQRKDAYELIAKSIAPSIYGSADIKKSIACLLFGGARKKLPDGITRRGDINVLLLGDPGTAKSQLLKFVEQVSPIGVYTSGKGSSAAGLTASVIRDPQSRSFIMEGGAMVLADGGVVCIDEFDKMREDDRVAIHEAMEQQTISIAKAGITTTLNSRCSVLAAANSVYGRWDESRGDDNIDFMPTILSRFDMIYIVKDTHDVLKDATLAKHVIEVHVNASAAKERDIAGVPKTATTDSDGVMTMFDTDGFLTIEFLKKFVTYARLNCGPRLTPQASEKLVNHYVKMRNPVVNADAFKSGKKAHNSAIPITVRQLEAIVRIAESIAKMELQQFATDKHVEEALRLFRVSTIEAAATGNLAGVEGFTSTADQEALNRIEVQMKKRFAIGTHVSEHLIVQDFVARQHYRESLVKKVIDNLVRRGDLQQKMQRKMLYRVR.

The MCM domain maps to Ala-330–Ile-536. An ADP-binding site is contributed by Arg-370. The Arginine finger motif lies at Ser-511 to Asp-514.

Belongs to the MCM family. In terms of assembly, component of the mcm2-7 complex. The complex forms a toroidal hexameric ring with the proposed subunit order mcm2-mcm6-mcm4-mcm7-mcm3-mcm5 (By simililarity).

It is found in the nucleus. Its subcellular location is the cytoplasm. The protein resides in the cytosol. It catalyses the reaction ATP + H2O = ADP + phosphate + H(+). In terms of biological role, acts as a component of the MCM2-7 complex (MCM complex) which is the replicative helicase essential for 'once per cell cycle' DNA replication initiation and elongation in eukaryotic cells. Core component of CDC45-MCM-GINS (CMG) helicase, the molecular machine that unwinds template DNA during replication, and around which the replisome is built. The active ATPase sites in the MCM2-7 ring are formed through the interaction surfaces of two neighboring subunits such that a critical structure of a conserved arginine finger motif is provided in trans relative to the ATP-binding site of the Walker A box of the adjacent subunit. The six ATPase active sites, however, are likely to contribute differentially to the complex helicase activity. The chain is DNA replication licensing factor mcm-5 (mcm-5) from Caenorhabditis elegans.